We begin with the raw amino-acid sequence, 138 residues long: Small ribosomal subunit protein uS9 (138 aa).

A compositionally biased stretch (basic and acidic residues) spans 100–118 (PENRPPLKTEGYLTRDPRA). Residues 100–138 (PENRPPLKTEGYLTRDPRAKERKKYGLHKARKAPQYSKR) form a disordered region. The segment covering 119 to 138 (KERKKYGLHKARKAPQYSKR) has biased composition (basic residues).

Belongs to the universal ribosomal protein uS9 family.

The chain is Small ribosomal subunit protein uS9 from Trichormus variabilis (strain ATCC 29413 / PCC 7937) (Anabaena variabilis).